Consider the following 254-residue polypeptide: ATP-dependent L-serine kinase SbnI (254 aa).

E20 is an active-site residue. Position 33 (S33) interacts with ADP. O-phospho-L-serine is bound at residue I57. D58, G59, H61, and R62 together coordinate ADP. O-phospho-L-serine contacts are provided by G59 and H61. Positions 98 and 229 each coordinate O-phospho-L-serine.

As to quaternary structure, forms dimers and tetramers in solution. Predominantly forms dimers. Dimerization/oligomerization is not essential for kinase activity.

The catalysed reaction is L-serine + ATP = O-phospho-L-serine + ADP + H(+). It functions in the pathway siderophore biosynthesis. Its activity is regulated as follows. Binds heme and heme binding inhibits DNA binding. Free serine kinase that uses ATP to phosphorylate L-serine to yield O-phospho-L-serine and ADP. O-phospho-L-serine serves as a substrate for SbnA and is a precursor for staphyloferrin B biosynthesis. Is also a DNA-binding regulatory protein that senses heme to control gene expression for siderophore biosynthesis. Binds to DNA within the sbnC coding region and is required for expression of genes in the sbn operon from sbnD onward. The protein is ATP-dependent L-serine kinase SbnI of Staphylococcus aureus (strain NCTC 8325 / PS 47).